The chain runs to 203 residues: A-type ATP synthase subunit E (203 aa).

The protein belongs to the V-ATPase E subunit family. Has multiple subunits with at least A(3), B(3), C, D, E, F, H, I and proteolipid K(x).

The protein resides in the cell membrane. Functionally, component of the A-type ATP synthase that produces ATP from ADP in the presence of a proton gradient across the membrane. The protein is A-type ATP synthase subunit E of Methanococcus maripaludis (strain C6 / ATCC BAA-1332).